The chain runs to 439 residues: MTDNIMQTIAVIALGCPKNTVEAEYLLGIFQEKGFKISSNLDKADIVVIHTCSFIKAAKAESEKCIRTILDIKKKKSLRVYVSGCLPQLLKEKMSVLFPDIDGFAGTGTLQYLPDLVFGKNFGRFILPPGGLNDSNYRVLSSTIPSAYLKIAEGCGHVCSFCIIPALRGRYESRTMESLVDEVAALAESGIKELILIAQDTTGYGKDIYGAFVLDKLLVKLSKINGLKWIRLLYAYPSSITDGLIEVFKEHKKICSYMDIPIQHASKNVLSAMKRPLNTPGIIEKIKRKLPDIVLRTSIIAGFPGETKKDVNELINFLNRGYFQYAGVFEYSDLKEAVSSKLKRHVRAAAAKERKIMIENAQYNIFQAKIDKIKNNTIEFLVESCLKKGNVYSIKGRSSFQSPEIDGNIILENDKPLTVGGFCKAKVRSVDGYNIKVYI.

The MTTase N-terminal domain occupies 7-122; sequence QTIAVIALGC…LPDLVFGKNF (116 aa). Positions 16, 52, 85, 155, 159, and 162 each coordinate [4Fe-4S] cluster. The Radical SAM core domain maps to 141-369; that stretch reads SSTIPSAYLK…NAQYNIFQAK (229 aa).

Belongs to the methylthiotransferase family. RimO subfamily. [4Fe-4S] cluster serves as cofactor.

It localises to the cytoplasm. It carries out the reaction L-aspartate(89)-[ribosomal protein uS12]-hydrogen + (sulfur carrier)-SH + AH2 + 2 S-adenosyl-L-methionine = 3-methylsulfanyl-L-aspartate(89)-[ribosomal protein uS12]-hydrogen + (sulfur carrier)-H + 5'-deoxyadenosine + L-methionine + A + S-adenosyl-L-homocysteine + 2 H(+). Functionally, catalyzes the methylthiolation of an aspartic acid residue of ribosomal protein uS12. This chain is Ribosomal protein uS12 methylthiotransferase RimO, found in Endomicrobium trichonymphae.